A 172-amino-acid chain; its full sequence is UPF0102 protein AM1_3954 (172 aa).

Belongs to the UPF0102 family.

This chain is UPF0102 protein AM1_3954, found in Acaryochloris marina (strain MBIC 11017).